The sequence spans 156 residues: ADKAASGVLTKLPQKQIQEMKEAFSMIDVDRDGFVNKDDLKAISEQLGRTPDDKELTAMLKEAPGPLNFTMFLSIFSDKLSGTDTEETLRNAFAMFDELDTKKLNIEYIKDLLENMGDNFTKDEMRMTFKEAPVTGGKFDYVKFTAMIKGSGEEEA.

At alanine 1 the chain carries Blocked amino end (Ala). EF-hand domains are found at residues 15 to 50 (KQIQ…LGRT) and 84 to 119 (DTEE…MGDN). Ca(2+) contacts are provided by aspartate 28, aspartate 30, aspartate 32, and aspartate 39.

Functionally, in molluscan muscle, calcium regulation is associated with myosin rather than with actin. Muscle myosin contains two types of light chains: the catalytic light chain, essential for ATPase activity, and the regulatory light chain, a calcium-binding protein responsible for Ca(2+) dependent binding and Ca(2+) dependent Mg-ATPase activity. This Mizuhopecten yessoensis (Japanese scallop) protein is Myosin regulatory light chain, striated adductor muscle.